Consider the following 185-residue polypeptide: Thymidine kinase (185 aa).

ATP contacts are provided by residues 10-17 (GPMYSGKT) and 83-86 (DEVQ). E84 functions as the Proton acceptor in the catalytic mechanism. Residues C140, C143, C173, and C176 each contribute to the Zn(2+) site.

This sequence belongs to the thymidine kinase family. Homotetramer.

The protein localises to the cytoplasm. The catalysed reaction is thymidine + ATP = dTMP + ADP + H(+). The polypeptide is Thymidine kinase (Pseudothermotoga lettingae (strain ATCC BAA-301 / DSM 14385 / NBRC 107922 / TMO) (Thermotoga lettingae)).